We begin with the raw amino-acid sequence, 400 residues long: Imidazolonepropionase (400 aa).

Fe(3+) contacts are provided by histidine 70 and histidine 72. Zn(2+) contacts are provided by histidine 70 and histidine 72. 3 residues coordinate 4-imidazolone-5-propanoate: arginine 79, tyrosine 142, and histidine 175. Residue tyrosine 142 coordinates N-formimidoyl-L-glutamate. Histidine 239 contacts Fe(3+). Histidine 239 lines the Zn(2+) pocket. Glutamine 242 contacts 4-imidazolone-5-propanoate. Aspartate 314 is a Fe(3+) binding site. Aspartate 314 is a Zn(2+) binding site. N-formimidoyl-L-glutamate-binding residues include asparagine 316 and glycine 318. Threonine 319 is a binding site for 4-imidazolone-5-propanoate.

Belongs to the metallo-dependent hydrolases superfamily. HutI family. Zn(2+) serves as cofactor. Requires Fe(3+) as cofactor.

The protein resides in the cytoplasm. It carries out the reaction 4-imidazolone-5-propanoate + H2O = N-formimidoyl-L-glutamate. The protein operates within amino-acid degradation; L-histidine degradation into L-glutamate; N-formimidoyl-L-glutamate from L-histidine: step 3/3. Catalyzes the hydrolytic cleavage of the carbon-nitrogen bond in imidazolone-5-propanoate to yield N-formimidoyl-L-glutamate. It is the third step in the universal histidine degradation pathway. The polypeptide is Imidazolonepropionase (Methylobacterium nodulans (strain LMG 21967 / CNCM I-2342 / ORS 2060)).